Here is a 554-residue protein sequence, read N- to C-terminus: uncharacterized protein (554 aa).

This sequence to M.jannaschii MJ0047, MJ0162 and MJ1236.

This is an uncharacterized protein from Synechocystis sp. (strain ATCC 27184 / PCC 6803 / Kazusa).